The sequence spans 279 residues: Histone chaperone ASF1 (279 aa).

The segment at 1–143 (MSIVSLLGIK…HIVRNILAEK (143 aa)) is interaction with HIR1. Positions 1-155 (MSIVSLLGIK…VTRFNIVWDN (155 aa)) are interaction with histone H3, histone H4, RAD53 and the RF-C complex. Residues 156–279 (ENEGDLYPPE…TPKDAARSTN (124 aa)) are disordered. Over residues 168 to 244 (GVDDEEEEDD…DEEEGEEEVG (77 aa)) the composition is skewed to acidic residues. Positions 192-243 (DDQEDGEGEAEEAAEEEEEEEEKTEDNETNLEEEEEDIENSDGDEEEGEEEV) form a coiled coil. Basic and acidic residues-rich tracts occupy residues 245–254 (SVDKNEDGND) and 269–279 (STPKDAARSTN).

Belongs to the ASF1 family. In terms of assembly, interacts with histone H3/H4 heterodimers via both histone H3 and histone H4. Binds with higher affinity to H3/H4 heterodimers where histone H3 has been pre-acetylated on 'Lys-14'. Interacts with RAD53 and this may impair interaction with histones and chromatin assembly; the interaction is reduced upon activation of DNA damage or replication checkpoints which in turn promotes histone binding and chromatin assembly. Interacts with the CAC2 subunit of chromatin assembly factor 1 (CAF-1). Interacts with the HIR1, HIR2, HIR3 and HPC2 subunits of the HIR complex. Interacts with the RFC1, RFC2, RFC3, RFC4 and RFC5 subunits of the replication factor C (RF-C/RFC) complex; which may recruit this protein to DNA. Interacts with the SAS2, SAS4 and SAS5 subunits of the SAS/SAS-I complex. Interacts with the BDF1, BDF2, SPT15, TAF1 and TAF7 subunits of the TFIID complex. Interacts with RTT109 and VPS75; the interaction with RTT109 is direct.

The protein localises to the nucleus. Histone chaperone that facilitates histone deposition and histone exchange and removal during nucleosome assembly and disassembly. Facilitates histone deposition through both replication-dependent and replication-independent chromatin assembly pathways. Cooperates with chromatin assembly factor 1 (CAF-1) to promote replication-dependent chromatin assembly and with the HIR complex to promote replication-independent chromatin assembly, which may occur during transcription and DNA repair. May be required for the maintenance of a subset of replication elongation factors, including DNA polymerase epsilon, the RFC complex and PCNA, at stalled replication forks. Also required for RTT109-dependent acetylation of histone H3 on 'Lys-9' and 'Lys-56'. Promotion of RTT109-mediated histone H3 'Lys-56' acetylation is dependent on interactions with histone H3 pre-acetylated on 'Lys-14'. The protein is Histone chaperone ASF1 of Saccharomyces cerevisiae (strain ATCC 204508 / S288c) (Baker's yeast).